We begin with the raw amino-acid sequence, 259 residues long: Imidazole glycerol phosphate synthase subunit HisF (259 aa).

Residues D11 and D130 contribute to the active site.

It belongs to the HisA/HisF family. In terms of assembly, heterodimer of HisH and HisF.

It is found in the cytoplasm. The catalysed reaction is 5-[(5-phospho-1-deoxy-D-ribulos-1-ylimino)methylamino]-1-(5-phospho-beta-D-ribosyl)imidazole-4-carboxamide + L-glutamine = D-erythro-1-(imidazol-4-yl)glycerol 3-phosphate + 5-amino-1-(5-phospho-beta-D-ribosyl)imidazole-4-carboxamide + L-glutamate + H(+). Its pathway is amino-acid biosynthesis; L-histidine biosynthesis; L-histidine from 5-phospho-alpha-D-ribose 1-diphosphate: step 5/9. IGPS catalyzes the conversion of PRFAR and glutamine to IGP, AICAR and glutamate. The HisF subunit catalyzes the cyclization activity that produces IGP and AICAR from PRFAR using the ammonia provided by the HisH subunit. This is Imidazole glycerol phosphate synthase subunit HisF from Polaromonas sp. (strain JS666 / ATCC BAA-500).